The sequence spans 500 residues: Replication factor C large subunit (500 aa).

44–51 (GSPGVGKT) lines the ATP pocket. Residues 443–500 (HAADDLGASDGETTNASGTASSSGDDGDADGTTDGDGSDANDGNDDDDDGQAGLSDFV) are disordered. Residues 455-466 (TTNASGTASSSG) are compositionally biased toward low complexity. Positions 467 to 492 (DDGDADGTTDGDGSDANDGNDDDDDG) are enriched in acidic residues.

This sequence belongs to the activator 1 small subunits family. RfcL subfamily. As to quaternary structure, heteromultimer composed of small subunits (RfcS) and large subunits (RfcL).

In terms of biological role, part of the RFC clamp loader complex which loads the PCNA sliding clamp onto DNA. The polypeptide is Replication factor C large subunit (Halorubrum lacusprofundi (strain ATCC 49239 / DSM 5036 / JCM 8891 / ACAM 34)).